Here is a 512-residue protein sequence, read N- to C-terminus: Choline-sulfatase (512 aa).

Positions 14, 15, and 54 each coordinate Ca(2+). Cys54 acts as the Nucleophile in catalysis. Cys54 is subject to 3-oxoalanine (Cys). The active site involves His104. The Ca(2+) site is built by Asp296 and His297.

The protein belongs to the sulfatase family. It depends on Ca(2+) as a cofactor. The conversion to 3-oxoalanine (also known as C-formylglycine, FGly), of a serine or cysteine residue in prokaryotes and of a cysteine residue in eukaryotes, is critical for catalytic activity.

It carries out the reaction choline sulfate + H2O = choline + sulfate + H(+). The protein operates within amine and polyamine biosynthesis; choline biosynthesis; choline from choline sulfate: step 1/1. Its function is as follows. Converts choline-O-sulfate into choline. The chain is Choline-sulfatase (betC) from Rhizobium meliloti (strain 1021) (Ensifer meliloti).